Here is an 815-residue protein sequence, read N- to C-terminus: Probable AMP deaminase (815 aa).

A helical membrane pass occupies residues 5-27 (YALHLAVATLLGASFAAASAYYM). 2 disordered regions span residues 53-116 (LLDA…PVPT) and 144-173 (LLTN…STNM). Low complexity predominate over residues 105–116 (VRPTTPRSPVPT). The segment covering 159 to 173 (ASQNGDTKPVPSTNM) has biased composition (polar residues). Zn(2+)-binding residues include histidine 367 and histidine 369. Substrate contacts are provided by residues histidine 369 and 438–443 (KFNLKY). Histidine 635 serves as a coordination point for Zn(2+). Residue glutamate 638 coordinates substrate. Histidine 657 serves as the catalytic Proton acceptor. Aspartate 712 contributes to the Zn(2+) binding site. Position 713–716 (713–716 (DPLQ)) interacts with substrate.

It belongs to the metallo-dependent hydrolases superfamily. Adenosine and AMP deaminases family. Homodimer. Zn(2+) is required as a cofactor.

The protein resides in the membrane. It carries out the reaction AMP + H2O + H(+) = IMP + NH4(+). The protein operates within purine metabolism; IMP biosynthesis via salvage pathway; IMP from AMP: step 1/1. In terms of biological role, AMP deaminase plays a critical role in energy metabolism. The polypeptide is Probable AMP deaminase (AMPD) (Oryza sativa subsp. japonica (Rice)).